The following is a 92-amino-acid chain: Small ribosomal subunit protein bS20 (92 aa).

The tract at residues 1–25 (MANSAQARKRARQAAKANSHNSALR) is disordered.

The protein belongs to the bacterial ribosomal protein bS20 family.

Functionally, binds directly to 16S ribosomal RNA. This is Small ribosomal subunit protein bS20 from Paraburkholderia phymatum (strain DSM 17167 / CIP 108236 / LMG 21445 / STM815) (Burkholderia phymatum).